The following is a 391-amino-acid chain: AN1-type zinc finger and UBX domain-containing protein DDB_G0268260 (391 aa).

Residues 1-16 (MQQQSPPTAPQQQQQQ) show a composition bias toward low complexity. The segment at 1-20 (MQQQSPPTAPQQQQQQQRER) is disordered. 2 consecutive AN1-type zinc fingers follow at residues 26–74 (DHIG…QREN) and 118–166 (APKS…IINS). Zn(2+) contacts are provided by cysteine 32, cysteine 37, cysteine 47, cysteine 50, cysteine 55, histidine 58, histidine 64, cysteine 66, cysteine 124, cysteine 129, cysteine 139, cysteine 142, cysteine 147, histidine 150, histidine 156, and cysteine 158. Residues 185–236 (NINNNINNNKNNNNNNNNNNNNNNNNNNNNNNNNNNNNNNNNNNNNNSNNNN) are compositionally biased toward low complexity. Residues 185-240 (NINNNINNNKNNNNNNNNNNNNNNNNNNNNNNNNNNNNNNNNNNNNNSNNNNKLIY) form a disordered region. The region spanning 278-356 (SSEEIGEIGI…GLLPVSTLYM (79 aa)) is the UBX domain.

In Dictyostelium discoideum (Social amoeba), this protein is AN1-type zinc finger and UBX domain-containing protein DDB_G0268260.